Here is a 465-residue protein sequence, read N- to C-terminus: Cysteine--tRNA ligase (465 aa).

C30 contributes to the Zn(2+) binding site. The short motif at 32–42 (PTVYDRAHLGN) is the 'HIGH' region element. Zn(2+)-binding residues include C213, H238, and E242. The 'KMSKS' region motif lies at 271 to 275 (KMSKS). Position 274 (K274) interacts with ATP.

Belongs to the class-I aminoacyl-tRNA synthetase family. Monomer. Zn(2+) is required as a cofactor.

It localises to the cytoplasm. The catalysed reaction is tRNA(Cys) + L-cysteine + ATP = L-cysteinyl-tRNA(Cys) + AMP + diphosphate. This Ruegeria pomeroyi (strain ATCC 700808 / DSM 15171 / DSS-3) (Silicibacter pomeroyi) protein is Cysteine--tRNA ligase.